The sequence spans 734 residues: Photosystem I P700 chlorophyll a apoprotein A2 (734 aa).

The next 8 membrane-spanning stretches (helical) occupy residues 46–69, 135–158, 175–199, 273–291, 330–353, 369–395, 417–439, and 517–535; these read IFAS…FHVA, LYTG…LHLQ, LNHH…HVAI, IAHH…GHMY, IHFQ…QHMY, AALY…IFFI, AIIS…LYVH, and FLVH…LILV. [4Fe-4S] cluster contacts are provided by Cys559 and Cys568. 2 helical membrane passes run 575 to 596 and 643 to 665; these read AFYL…YWHW and LSVW…MFLI. The chlorophyll a site is built by His654, Met662, and Tyr670. A phylloquinone-binding site is contributed by Trp671. Residues 707-727 form a helical membrane-spanning segment; the sequence is LVGLAHFSVGYIFTYAAFLIA.

The protein belongs to the PsaA/PsaB family. The PsaA/B heterodimer binds the P700 chlorophyll special pair and subsequent electron acceptors. PSI consists of a core antenna complex that captures photons, and an electron transfer chain that converts photonic excitation into a charge separation. The eukaryotic PSI reaction center is composed of at least 11 subunits. It depends on P700 is a chlorophyll a/chlorophyll a' dimer, A0 is one or more chlorophyll a, A1 is one or both phylloquinones and FX is a shared 4Fe-4S iron-sulfur center. as a cofactor.

Its subcellular location is the plastid. The protein resides in the chloroplast thylakoid membrane. The catalysed reaction is reduced [plastocyanin] + hnu + oxidized [2Fe-2S]-[ferredoxin] = oxidized [plastocyanin] + reduced [2Fe-2S]-[ferredoxin]. PsaA and PsaB bind P700, the primary electron donor of photosystem I (PSI), as well as the electron acceptors A0, A1 and FX. PSI is a plastocyanin-ferredoxin oxidoreductase, converting photonic excitation into a charge separation, which transfers an electron from the donor P700 chlorophyll pair to the spectroscopically characterized acceptors A0, A1, FX, FA and FB in turn. Oxidized P700 is reduced on the lumenal side of the thylakoid membrane by plastocyanin. The sequence is that of Photosystem I P700 chlorophyll a apoprotein A2 from Nymphaea alba (White water-lily).